Reading from the N-terminus, the 1369-residue chain is Mediator of RNA polymerase II transcription subunit 23 (1369 aa).

Residues 1337 to 1369 (TESAAPPPPPMNSGSPAPQPNQVPVSVPLTVTQ) form a disordered region. A compositionally biased stretch (pro residues) spans 1341–1357 (APPPPPMNSGSPAPQPN).

It belongs to the Mediator complex subunit 23 family. Component of the Mediator complex.

Its subcellular location is the nucleus. Functionally, component of the Mediator complex, a coactivator involved in the regulated transcription of nearly all RNA polymerase II-dependent genes. Mediator functions as a bridge to convey information from gene-specific regulatory proteins to the basal RNA polymerase II transcription machinery. Mediator is recruited to promoters by direct interactions with regulatory proteins and serves as a scaffold for the assembly of a functional preinitiation complex with RNA polymerase II and the general transcription factors. The chain is Mediator of RNA polymerase II transcription subunit 23 (med23) from Xenopus laevis (African clawed frog).